We begin with the raw amino-acid sequence, 226 residues long: UPF0758 protein GWCH70_2550 (226 aa).

One can recognise an MPN domain in the interval 104 to 226 (VIRSPEDGAK…FVSLKEKGYV (123 aa)). The Zn(2+) site is built by H175, H177, and D188. Positions 175 to 188 (HNHPSGDPTPSRED) match the JAMM motif motif.

It belongs to the UPF0758 family.

The protein is UPF0758 protein GWCH70_2550 of Geobacillus sp. (strain WCH70).